The primary structure comprises 606 residues: Aspartate--tRNA(Asp/Asn) ligase (606 aa).

E187 is an L-aspartate binding site. Positions 211 to 214 (QQFK) are aspartate. Positions 233 and 461 each coordinate L-aspartate. 233-235 (RDE) is an ATP binding site. ATP is bound at residue E495. Position 502 (R502) interacts with L-aspartate. 547-550 (GLDR) is an ATP binding site.

The protein belongs to the class-II aminoacyl-tRNA synthetase family. Type 1 subfamily. In terms of assembly, homodimer.

It localises to the cytoplasm. It carries out the reaction tRNA(Asx) + L-aspartate + ATP = L-aspartyl-tRNA(Asx) + AMP + diphosphate. Its function is as follows. Aspartyl-tRNA synthetase with relaxed tRNA specificity since it is able to aspartylate not only its cognate tRNA(Asp) but also tRNA(Asn). Reaction proceeds in two steps: L-aspartate is first activated by ATP to form Asp-AMP and then transferred to the acceptor end of tRNA(Asp/Asn). This Chlorobium phaeobacteroides (strain DSM 266 / SMG 266 / 2430) protein is Aspartate--tRNA(Asp/Asn) ligase.